Here is a 411-residue protein sequence, read N- to C-terminus: Metacaspase-1B (411 aa).

The interval 1–97 is disordered; sequence MYHRHSAPPP…PPLEAQQFGN (97 aa). A compositionally biased stretch (pro residues) spans 7-65; it reads APPPPGRSRGYPPPQQQWPPQPYQYLPYPPQGPPPAHTFPPPAHRSYPSPYPTPPPHSP. Catalysis depends on residues histidine 198 and cysteine 254.

The protein belongs to the peptidase C14B family.

Its function is as follows. Involved in cell death (apoptosis). The protein is Metacaspase-1B (casB) of Neosartorya fischeri (strain ATCC 1020 / DSM 3700 / CBS 544.65 / FGSC A1164 / JCM 1740 / NRRL 181 / WB 181) (Aspergillus fischerianus).